A 270-amino-acid polypeptide reads, in one-letter code: uncharacterized protein (270 aa).

Residues 1 to 37 (MATHTSKRRIHRWENNELSEENSTIIYFPARGLMWTH) are Cytoplasmic-facing. A helical membrane pass occupies residues 38-58 (FPFVLGICLEFVGYVLKIVFI). Topologically, residues 59–65 (NSPSIST) are extracellular. A helical transmembrane segment spans residues 66-86 (FIAQSVLLLIAPSLYALSIFM). Residues 87–93 (LFSKMAR) are Cytoplasmic-facing. Residues 94 to 114 (LILMEAYMLIPAKFSTVSFVV) form a helical membrane-spanning segment. Residues 115–140 (ADMIGRVLQAVGGGLLSSWNSRNTGR) are Extracellular-facing. Residues 141–161 (ILIIVGLFIQIFCYTFLTFSQ) form a helical membrane-spanning segment. Residues 162–181 (LFLHYKMKATPSKIVRDSNE) are Cytoplasmic-facing. A helical transmembrane segment spans residues 182–202 (WFQYNFILLAGILLVNGRTIV). At 203-220 (RVVQFLMGLQSYIGQHEW) the chain is on the extracellular side. Residues 221 to 241 (CLYVFDTVLMFLLPLIFLATF) form a helical membrane-spanning segment. Over 242 to 270 (RARNLFKLQDKSVNIQLNKLLDKESVSED) the chain is Cytoplasmic.

This sequence belongs to the lipid-translocating exporter (LTE) (TC 9.A.26.1) family.

The protein localises to the membrane. This is an uncharacterized protein from Saccharomyces cerevisiae (strain ATCC 204508 / S288c) (Baker's yeast).